The chain runs to 381 residues: Sulfofructose kinase (381 aa).

ATP is bound by residues Gly-10, 72-73 (RY), and 100-103 (GNGT). Mg(2+) is bound at residue Asn-101. Asp-131 (proton acceptor) is an active-site residue.

The protein belongs to the phosphofructokinase type A (PFKA) family. Mg(2+) serves as cofactor.

The enzyme catalyses 6-deoxy-6-sulfo-D-fructose + ATP = 6-deoxy-6-sulfo-D-fructose 1-phosphate + ADP + H(+). Functionally, part of the sulfo-EMP2 pathway, a D-sulfoquinovose degradation pathway that produces sulfolactate (SL). Phosphorylates 6-deoxy-6-sulfo-D-fructose (SF) to 6-deoxy-6-sulfo-D-fructose 1-phosphate (SFP). The protein is Sulfofructose kinase of Alkalicoccus urumqiensis (Bacillus urumqiensis).